The following is a 542-amino-acid chain: MLIALIAVSVLAVAAIIGSLADRRAIGRRAERAESERDVKALELSRSQERLSRASQDLADSRKDVAKARAELESSRTRASDEARRADNADQARRSAEALLEINRRSVEELTERDHRLQEARRHLEEGLDKIEQDRLELAERSSQLDERDAELDRRHGQIVTELERVAGMSLDEARDELVEHLGREARVFAENSARAIVTEATASAEAKARHIVAEVIQRCSSEMVADTVVSVVPLPSNEMKGRVIGREGRNIRTFEQVTGVTVIIDDTPEIVLLSCFDPMRREVARQALTDLVEDGRIHPISIERAHQRAVDRIEDMCLDAAADALSRAGIDDIDDRLLPILGSLRFRTSYGQQVLDHCVECARLAANLAAEIGADIEICRRAAFLHDLGKSLTPGVEGSSHAAIGAELARRYGESEEVIHAIAAHHDEIDPVSVTDFIVKAADAISAARPGARRESLEAHVRRMDTIEEIATSFPGVVRAFALQAGREMQILVDPGAVDDHQASRLARQIALAIGEQVTVPGRTRVTVIRSFQAIETVGDA.

A helical transmembrane segment spans residues 1-21 (MLIALIAVSVLAVAAIIGSLA). The interval 52 to 92 (SRASQDLADSRKDVAKARAELESSRTRASDEARRADNADQA) is disordered. The segment covering 59–92 (ADSRKDVAKARAELESSRTRASDEARRADNADQA) has biased composition (basic and acidic residues). A KH domain is found at 229-289 (VVSVVPLPSN…MRREVARQAL (61 aa)). Residues 355–449 (VLDHCVECAR…VKAADAISAA (95 aa)) enclose the HD domain.

The protein belongs to the RNase Y family.

It localises to the cell membrane. In terms of biological role, endoribonuclease that initiates mRNA decay. The chain is Ribonuclease Y from Cutibacterium acnes (strain DSM 16379 / KPA171202) (Propionibacterium acnes).